The chain runs to 196 residues: Imidazoleglycerol-phosphate dehydratase (196 aa).

This sequence belongs to the imidazoleglycerol-phosphate dehydratase family.

Its subcellular location is the cytoplasm. The enzyme catalyses D-erythro-1-(imidazol-4-yl)glycerol 3-phosphate = 3-(imidazol-4-yl)-2-oxopropyl phosphate + H2O. It functions in the pathway amino-acid biosynthesis; L-histidine biosynthesis; L-histidine from 5-phospho-alpha-D-ribose 1-diphosphate: step 6/9. This is Imidazoleglycerol-phosphate dehydratase from Clostridium botulinum (strain 657 / Type Ba4).